A 91-amino-acid chain; its full sequence is Insertion element IS1 2 protein InsA (91 aa).

This sequence belongs to the IS1 elements InsA family.

Absolutely required for transposition of IS1. The protein is Insertion element IS1 2 protein InsA (insA2) of Escherichia coli (strain K12).